Consider the following 293-residue polypeptide: Protein YIF1A (293 aa).

The interval 1–27 (MAYHSAYGVHGSKHRTRAAPDPPPLFD) is disordered. Ala2 carries the N-acetylalanine modification. Over 2–138 (AYHSAYGVHG…PPRKDLNAPD (137 aa)) the chain is Cytoplasmic. Ser12 is subject to Phosphoserine. A helical membrane pass occupies residues 139–159 (LYIPTMAFITYVLLAGMALGI). Residues 160-174 (QQRFSPEVLGLCAST) lie on the Lumenal side of the membrane. Residues 175-195 (ALVWVFMEVLALLLGLYLATV) form a helical membrane-spanning segment. Residues 196–203 (RSELSTFH) lie on the Cytoplasmic side of the membrane. The chain crosses the membrane as a helical span at residues 204-226 (LLAYSGYKYVGMILSVLTGLLFG). Topologically, residues 227-229 (SDG) are lumenal. Residues 230-249 (YYVALAWTSSALMYFIVRSL) traverse the membrane as a helical segment. Over 250–271 (RTAASGPDSMGGPAPRQRLQLY) the chain is Cytoplasmic. The helical transmembrane segment at 272–292 (LTLGAAAFQPLIIYWLTFHLV) threads the bilayer.

This sequence belongs to the YIF1 family. Interacts with YIPF5.

Its subcellular location is the endoplasmic reticulum membrane. The protein localises to the golgi apparatus membrane. It localises to the endoplasmic reticulum-Golgi intermediate compartment membrane. Its function is as follows. Possible role in transport between endoplasmic reticulum and Golgi. This is Protein YIF1A (Yif1a) from Mus musculus (Mouse).